Consider the following 340-residue polypeptide: Biotin synthase (340 aa).

The disordered stretch occupies residues 1 to 21; the sequence is MDAASVSFGSGHDLSSQPRHD. The region spanning 53–272 is the Radical SAM core domain; the sequence is NHVETANLLS…IAVARIMMPR (220 aa). Residues Cys-68, Cys-72, and Cys-75 each coordinate [4Fe-4S] cluster. Residues Cys-112, Cys-143, Cys-203, and Arg-276 each coordinate [2Fe-2S] cluster.

The protein belongs to the radical SAM superfamily. Biotin synthase family. In terms of assembly, homodimer. [4Fe-4S] cluster serves as cofactor. Requires [2Fe-2S] cluster as cofactor.

It carries out the reaction (4R,5S)-dethiobiotin + (sulfur carrier)-SH + 2 reduced [2Fe-2S]-[ferredoxin] + 2 S-adenosyl-L-methionine = (sulfur carrier)-H + biotin + 2 5'-deoxyadenosine + 2 L-methionine + 2 oxidized [2Fe-2S]-[ferredoxin]. The protein operates within cofactor biosynthesis; biotin biosynthesis; biotin from 7,8-diaminononanoate: step 2/2. Catalyzes the conversion of dethiobiotin (DTB) to biotin by the insertion of a sulfur atom into dethiobiotin via a radical-based mechanism. The polypeptide is Biotin synthase (Nitrobacter hamburgensis (strain DSM 10229 / NCIMB 13809 / X14)).